Here is a 601-residue protein sequence, read N- to C-terminus: ATP-dependent lipid A-core flippase (601 aa).

Residues 28 to 328 enclose the ABC transmembrane type-1 domain; the sequence is LLSVCGLIVY…LTRVNAEFQR (301 aa). Transmembrane regions (helical) follow at residues 32-52, 81-101, 160-180, 183-203, 267-287, and 296-316; these read CGLI…GPFI, VLLM…FANF, ALIS…LMFY, WKLS…ITIV, AVSQ…VLYA, and DLTA…LQPI. Residues 360 to 597 enclose the ABC transporter domain; sequence LRFDNVSFSY…GGMYAKLYQM (238 aa). An ATP-binding site is contributed by 394 to 401; sequence GRSGSGKS.

This sequence belongs to the ABC transporter superfamily. Lipid exporter (TC 3.A.1.106) family. As to quaternary structure, homodimer.

The protein localises to the cell inner membrane. The enzyme catalyses ATP + H2O + lipid A-core oligosaccharideSide 1 = ADP + phosphate + lipid A-core oligosaccharideSide 2.. Functionally, involved in lipopolysaccharide (LPS) biosynthesis. Translocates lipid A-core from the inner to the outer leaflet of the inner membrane. Transmembrane domains (TMD) form a pore in the inner membrane and the ATP-binding domain (NBD) is responsible for energy generation. This Shewanella sp. (strain MR-4) protein is ATP-dependent lipid A-core flippase.